The primary structure comprises 613 residues: Alkyldihydroxyacetonephosphate synthase (613 aa).

The FAD-binding PCMH-type domain occupies Ile126–Leu307. FAD is bound by residues Pro158–Asn164, Asp228–Thr234, Ala241–Ser244, and Glu291–Val297. Arg437 serves as a coordination point for substrate. The Proton donor/acceptor role is filled by Tyr498. The segment at His534–His536 is important for enzyme activity. The segment at Asn572–Arg593 is disordered. A Microbody targeting signal motif is present at residues Ala611–Leu613.

Belongs to the FAD-binding oxidoreductase/transferase type 4 family. Homodimer. FAD serves as cofactor.

Its subcellular location is the peroxisome. It carries out the reaction a long chain fatty alcohol + a 1-acylglycerone 3-phosphate = a 1-O-alkylglycerone 3-phosphate + a long-chain fatty acid + H(+). The protein operates within glycerolipid metabolism; ether lipid biosynthesis. Catalyzes the exchange of an acyl for a long-chain alkyl group and the formation of the ether bond in the biosynthesis of ether phospholipids. The polypeptide is Alkyldihydroxyacetonephosphate synthase (Trypanosoma brucei brucei).